Consider the following 701-residue polypeptide: Elongation factor G (701 aa).

Residues 11–287 (TKVRNIGIMA…AVIDYLPSPL (277 aa)) form the tr-type G domain. Residues 20–27 (AHIDAGKT), 84–88 (DTPGH), and 138–141 (NKMD) each bind GTP.

Belongs to the TRAFAC class translation factor GTPase superfamily. Classic translation factor GTPase family. EF-G/EF-2 subfamily.

It localises to the cytoplasm. Its function is as follows. Catalyzes the GTP-dependent ribosomal translocation step during translation elongation. During this step, the ribosome changes from the pre-translocational (PRE) to the post-translocational (POST) state as the newly formed A-site-bound peptidyl-tRNA and P-site-bound deacylated tRNA move to the P and E sites, respectively. Catalyzes the coordinated movement of the two tRNA molecules, the mRNA and conformational changes in the ribosome. The sequence is that of Elongation factor G from Mycobacterium avium (strain 104).